Reading from the N-terminus, the 283-residue chain is Tumor necrosis factor receptor superfamily member 14 (283 aa).

An N-terminal signal peptide occupies residues 1–38 (MEPPGDWGPPPWRSTPKTDVLRLVLYLTFLGAPCYAPA). Topologically, residues 39–202 (LPSCKEDEYP…GAGTSSSHWV (164 aa)) are extracellular. Disulfide bonds link cysteine 42–cysteine 53, cysteine 54–cysteine 67, cysteine 57–cysteine 75, cysteine 78–cysteine 93, cysteine 96–cysteine 111, cysteine 99–cysteine 119, cysteine 121–cysteine 138, and cysteine 127–cysteine 135. TNFR-Cys repeat units follow at residues 42-75 (CKED…GTVC), 78-119 (CPPG…NAVC), and 121-162 (CSPG…DTLC). Residue asparagine 110 is glycosylated (N-linked (GlcNAc...) asparagine). An N-linked (GlcNAc...) asparagine glycan is attached at asparagine 173. The chain crosses the membrane as a helical span at residues 203–223 (WWFLSGSLVIVIVCSTVGLII). Over 224-283 (CVKRRKPRGDVVKVIVSVQRKRQEAEGEATVIEALQAPPDVTTVAVEETIPSFTGRSPNH) the chain is Cytoplasmic. Serine 240 carries the post-translational modification Phosphoserine.

It belongs to the tumor necrosis factor receptor superfamily. In terms of assembly, interacts with TRAF2, TRAF3 and TRAF5. Interacts (via CRD1/TNFR-Cys 1) with CD160; this interaction is direct. Interacts with LTA and TNFSF14. Interacts (via CRD1/TNFR-Cys 1) in cis and trans with BTLA; the cis interactions inhibits the trans interactions. (Microbial infection) Interacts with herpes simplex virus 1/HHV-1 envelope glycoprotein D. As to quaternary structure, (Microbial infection) Interacts with herpes simplex virus 2/HHV-2 envelope glycoprotein D. Post-translationally, N-glycosylated. In terms of tissue distribution, widely expressed, with the highest expression in lung, spleen and thymus. Expressed in a subpopulation of B cells and monocytes. Expressed in naive T cells.

It is found in the cell membrane. Receptor for four distinct ligands: The TNF superfamily members TNFSF14/LIGHT and homotrimeric LTA/lymphotoxin-alpha and the immunoglobulin superfamily members BTLA and CD160, altogether defining a complex stimulatory and inhibitory signaling network. Signals via the TRAF2-TRAF3 E3 ligase pathway to promote immune cell survival and differentiation. Participates in bidirectional cell-cell contact signaling between antigen presenting cells and lymphocytes. In response to ligation of TNFSF14/LIGHT, delivers costimulatory signals to T cells, promoting cell proliferation and effector functions. Interacts with CD160 on NK cells, enhancing IFNG production and anti-tumor immune response. In the context of bacterial infection, acts as a signaling receptor on epithelial cells for CD160 from intraepithelial lymphocytes, triggering the production of antimicrobial proteins and pro-inflammatory cytokines. Upon binding to CD160 on activated CD4+ T cells, down-regulates CD28 costimulatory signaling, restricting memory and alloantigen-specific immune response. May interact in cis (on the same cell) or in trans (on other cells) with BTLA. In cis interactions, appears to play an immune regulatory role inhibiting in trans interactions in naive T cells to maintain a resting state. In trans interactions, can predominate during adaptive immune response to provide survival signals to effector T cells. Functionally, (Microbial infection) Acts as a receptor for Herpes simplex virus 1/HHV-1. Its function is as follows. (Microbial infection) Acts as a receptor for Herpes simplex virus 2/HHV-2. This is Tumor necrosis factor receptor superfamily member 14 from Homo sapiens (Human).